We begin with the raw amino-acid sequence, 859 residues long: Probable helicase A859L (859 aa).

One can recognise a Helicase ATP-binding domain in the interval 178–349 (YQELQRSGRA…KNRDLFGGVA (172 aa)). 191-198 (MACRCGKT) contacts ATP. The DEAH box signature appears at 298 to 301 (DECH). One can recognise a Helicase C-terminal domain in the interval 394–553 (QIIMALAYLK…RFYEHLLNPS (160 aa)).

This sequence belongs to the asfivirus helicase A859L family.

The polypeptide is Probable helicase A859L (Ornithodoros (relapsing fever ticks)).